Reading from the N-terminus, the 572-residue chain is Isocitrate lyase (572 aa).

104 to 106 (SGW) is a binding site for substrate. Residue D175 coordinates Mg(2+). The Proton acceptor role is filled by C213. Substrate contacts are provided by residues 214 to 215 (GH), R250, 437 to 441 (NLSPS), and T472. Residues 550–572 (QFKGSWTGPGSESSSHVLAKSRM) are disordered. Residues 570–572 (SRM) carry the Microbody targeting signal motif.

It belongs to the isocitrate lyase/PEP mutase superfamily. Isocitrate lyase family. Mg(2+) serves as cofactor. In terms of tissue distribution, expressed in leaves.

The protein localises to the glyoxysome. The catalysed reaction is D-threo-isocitrate = glyoxylate + succinate. It functions in the pathway carbohydrate metabolism; glyoxylate cycle; (S)-malate from isocitrate: step 1/2. Involved in storage lipid mobilization during the growth of higher plant seedling. This Oryza sativa subsp. japonica (Rice) protein is Isocitrate lyase.